The primary structure comprises 446 residues: Minor fimbrium tip subunit Mfa3 (446 aa).

The first 20 residues, 1-20 (MMQLKKRYFALILLLFLWSG), serve as a signal peptide directing secretion. C21 carries N-palmitoyl cysteine lipidation. A lipid anchor (S-diacylglycerol cysteine) is attached at C21. The propeptide occupies 21-43 (CDRGVDPQPDPLQPDVYLLVNAR).

The protein belongs to the bacteroidetes fimbrillin superfamily. FimB/Mfa2 family. In terms of assembly, component of the fimbrium tip. Minor fimbriae are composed of a structural subunit, most often Mfa1, and the accessory subunits Mfa3, Mfa4 and Mfa5. Fimbrium assembly occurs by linear, head-to-tail oligomerization of fimbrial subunits. This is mediated via insertion of a C-terminal beta-strand from one subunit into a groove in the N-terminal domain of the following subunit. Mfa3 is required for Mfa4 and Mfa5 insertion into the fimbrium.

It is found in the fimbrium. Its subcellular location is the cell outer membrane. Its function is as follows. Tip subunit of the minor fimbriae. These filamentous pili are attached to the cell surface; they mediate biofilm formation, adhesion onto host cells and onto other bacteria that are part of the oral microbiome. They play an important role in invasion of periodontal tissues and are recognized as major virulence factors. Fimbrium subunits from different strains have highly divergent sequences, and this correlates with pathogenicity. The sequence is that of Minor fimbrium tip subunit Mfa3 (mfa3) from Porphyromonas gingivalis (strain ATCC 33277 / DSM 20709 / CIP 103683 / JCM 12257 / NCTC 11834 / 2561).